We begin with the raw amino-acid sequence, 132 residues long: Small ribosomal subunit protein uS8 (132 aa).

This sequence belongs to the universal ribosomal protein uS8 family. As to quaternary structure, part of the 30S ribosomal subunit. Contacts proteins S5 and S12.

One of the primary rRNA binding proteins, it binds directly to 16S rRNA central domain where it helps coordinate assembly of the platform of the 30S subunit. This chain is Small ribosomal subunit protein uS8, found in Lactococcus lactis subsp. lactis (strain IL1403) (Streptococcus lactis).